The sequence spans 377 residues: Short chain dehydrogenase gsfE (377 aa).

NADP(+) is bound by residues Asp89, Gln121, Tyr226, Ala266, and Ser268. The active-site Proton donor is Tyr226.

Belongs to the short-chain dehydrogenases/reductases (SDR) family. Highly divergent.

It carries out the reaction dehydrogriseofulvin + NADPH + H(+) = griseofulvin + NADP(+). The protein operates within secondary metabolite biosynthesis; terpenoid biosynthesis. Its function is as follows. Short chain dehydrogenase; part of the gene cluster that mediates the biosynthesis of griseofulvin, an important antifungal drug that has been in use for a long time for treating dermatophyte infections. The first step of the pathway is the formation of the heptaketide backbone by gsfA which is initiated by priming with acetyl-CoA, followed by sequential condensations of 6 malonyl-CoA units. The resulting benzophenone can undergo a spontaneous dehydration to form norlichexanthone. However, the true precursor for the griseofulvin biosynthesis is not norlichexanthone, but the heptaketide benzophenone that is O-methylated at 3-OH by gsfB to produce griseophenone D which is further methylated at 9-OH by gsfC to yield griseophenone C. Griseophenone C is then substrate of halogenase gsfI which is responsible for the regio-specific chlorination at the C13 position to form griseophenone B. The cytochrome P450 gsfF catalyzes the coupling of orcinol and phloroglucinol rings in griseophenone B to form desmethyl-dehydrogriseofulvin A which is further methylated at 5-OH by gsfD to yield dehydrogriseofulvin. Finally, gsfE performs stereospecific reduction of enone 18 of dehydrogriseofulvin to afford the final product griseofulvin. The polypeptide is Short chain dehydrogenase gsfE (Penicillium aethiopicum).